A 1311-amino-acid polypeptide reads, in one-letter code: Nephrocystin-3 (1311 aa).

Residues 81 to 183 (SKNNEIASMQ…LQRLQAQGIQ (103 aa)) adopt a coiled-coil conformation. TPR repeat units lie at residues 889 to 923 (LSYWQLVGKDKISMASEYFDALKQYERSCEGEEKM), 927 to 960 (ADLYETLGRFLKDLGLLSQAVTPLQRSLEIRETA), 969 to 1002 (AQSLHQLAGVYVQSKKFGNAEQLYKQALEISENA), 1011 to 1044 (ARELDALAVLYQKQNKFEQAEQLRKKSLKIRQKS), 1077 to 1110 (ARTLNELGVLYYLQNNLETAETFLKRSLEMRERV), 1119 to 1152 (AQSINNLAALYNEKKQYDKAEELYERALDIRRRA), 1161 to 1194 (AYTVKHLAVLYKRKGKLDKAVPLYELAVEIRQKS), 1203 to 1236 (ATALVNLAVLYCQMKKQAEASPLYERAMKIYEDS), and 1245 to 1278 (GETLKNLAVLRYEEGDFEKAAELYKRAMEIKETE).

It is found in the cell projection. The protein localises to the cilium. In terms of biological role, required for normal ciliary development and function. Inhibits disheveled-1-induced canonical Wnt-signaling activity and may also play a role in the control of non-canonical Wnt signaling that regulates planar cell polarity. Probably acts as a molecular switch between different Wnt signaling pathways. Required for proper convergent extension cell movements. This chain is Nephrocystin-3 (nphp3), found in Xenopus tropicalis (Western clawed frog).